The chain runs to 491 residues: MTTALKVKTSSLPGSRLALEVGVPADRCKASYEAAVERLSRSVRLPGFRKGRVPKPVLLQQIGPLRVKASALEDLVDSVLRDAVEQEKVEVLGQPSLSGNFEELLEKFDPAKELVVTLEMDVAPTPTLKSTKGLSAEAESVAYDPARVDELLDQSRRQLATLVPVSDRAAAMGDVAVVSFSGVFSDDKSAIEGGSANGLDVELEEGRMISGFVEGVVGMKPGDKKDVDCQFPDDYPEETCRGRKALFSISLDELKGRELPELDDAFAQQASDKKTLSELREDLENRLKQDAEQRQKNNRHEALLKALVDQLEVELPESLIKEEINSLLQETAAQMAQQGMDVKKLFTPETVQNLAQASRGEATERLQRSLALKALAKAEGISVADKDLEAKIKEVSAGFSDTNKIDPQRLRDAVAEDLLRETLLSWLEENAKLTMVDPASEDKPAKASKAKSSKAKAEKEPAAEGQAKAKPAAKTSKSKTKAAEKLITPID.

In terms of domain architecture, PPIase FKBP-type spans 173–260; it reads GDVAVVSFSG…LDELKGRELP (88 aa). Positions 435-491 are disordered; that stretch reads MVDPASEDKPAKASKAKSSKAKAEKEPAAEGQAKAKPAAKTSKSKTKAAEKLITPID. Positions 463 to 475 are enriched in low complexity; that stretch reads AEGQAKAKPAAKT.

This sequence belongs to the FKBP-type PPIase family. Tig subfamily.

Its subcellular location is the cytoplasm. It carries out the reaction [protein]-peptidylproline (omega=180) = [protein]-peptidylproline (omega=0). In terms of biological role, involved in protein export. Acts as a chaperone by maintaining the newly synthesized protein in an open conformation. Functions as a peptidyl-prolyl cis-trans isomerase. This is Trigger factor from Synechococcus sp. (strain RCC307).